The following is a 107-amino-acid chain: Sperm-specific class P protein 32 (107 aa).

Positions 1–20 are disordered; sequence MLTIEPPSATFPASGGSSTH. The region spanning 1–107 is the MSP domain; the sequence is MLTIEPPSAT…GDVTILLKTN (107 aa).

As to expression, expressed at higher level in testis.

The protein is Sperm-specific class P protein 32 (ssp-32) of Caenorhabditis elegans.